A 919-amino-acid chain; its full sequence is GPI ethanolamine phosphate transferase 1 (919 aa).

The Cytoplasmic portion of the chain corresponds to Met-1–Leu-9. The helical transmembrane segment at Leu-10–Ile-30 threads the bilayer. Topologically, residues Ser-31–Thr-457 are lumenal. N-linked (GlcNAc...) asparagine glycosylation is found at Asn-90, Asn-138, Asn-198, Asn-202, Asn-286, and Asn-312. A helical membrane pass occupies residues Ile-458 to Phe-478. Over Ile-479–Lys-488 the chain is Cytoplasmic. A helical membrane pass occupies residues Ala-489–Phe-509. Residues Tyr-510–His-512 lie on the Lumenal side of the membrane. The helical transmembrane segment at Ser-513 to Thr-533 threads the bilayer. Residues Asn-534 to Lys-553 lie on the Cytoplasmic side of the membrane. A helical membrane pass occupies residues Arg-554–His-574. The Lumenal portion of the chain corresponds to Arg-575–Trp-576. A helical transmembrane segment spans residues Thr-577–Leu-597. Ser-598 is a topological domain (cytoplasmic). The chain crosses the membrane as a helical span at residues Val-599–Val-619. Topologically, residues Lys-620–Gln-626 are lumenal. A helical transmembrane segment spans residues Ile-627 to Ser-647. Residues Arg-648–Ala-655 lie on the Cytoplasmic side of the membrane. A helical membrane pass occupies residues Ile-656–Ile-676. Over Ser-677–Glu-687 the chain is Lumenal. A helical transmembrane segment spans residues Ser-688–Tyr-708. Residues Arg-709–Leu-720 are Cytoplasmic-facing. The helical transmembrane segment at Ile-721 to Phe-741 threads the bilayer. At Tyr-742–Val-776 the chain is on the lumenal side. The helical transmembrane segment at Ser-777 to Ile-797 threads the bilayer. The Cytoplasmic segment spans residues Ser-798–Arg-807. Residues Leu-808–Pro-828 form a helical membrane-spanning segment. The Lumenal segment spans residues Tyr-829–Tyr-848. A helical transmembrane segment spans residues Thr-849–Leu-869. The Cytoplasmic portion of the chain corresponds to Arg-870 to Tyr-885. A helical transmembrane segment spans residues Cys-886–Leu-906. Residues Lys-907–Gln-919 are Lumenal-facing.

Belongs to the PIGG/PIGN/PIGO family. PIGN subfamily. As to quaternary structure, interacts with CSF1; CSF1 channels phosphatidylethanolamine to MCD4 in the endoplasmic reticulum at contact sites to support GPI anchor biosynthesis. In terms of processing, N-glycosylated.

The protein localises to the endoplasmic reticulum membrane. The protein resides in the golgi apparatus membrane. It is found in the vacuole membrane. It participates in glycolipid biosynthesis; glycosylphosphatidylinositol-anchor biosynthesis. In terms of biological role, ethanolamine phosphate transferase involved in glycosylphosphatidylinositol-anchor biosynthesis. Transfers ethanolamine phosphate to the first alpha-1,4-linked mannose of the glycosylphosphatidylinositol precursor of GPI-anchor. Ethanolamine phosphate on the alpha-1,4-linked mannose is essential for further mannosylation by GPI10 and is necessary for an efficient recognition of GPI lipids and GPI proteins by the GPI transamidase, for the efficient transport of GPI anchored proteins from endoplasmic reticulum to Golgi and for the physiological incorporation of ceramides into GPI anchors by lipid remodeling. Also involved in non-mitochondrial ATP movements across membrane and participates in Golgi and endoplasmic reticulum function, Also required for the incorporation of BGL2 into the cell wall. In Saccharomyces cerevisiae (strain ATCC 204508 / S288c) (Baker's yeast), this protein is GPI ethanolamine phosphate transferase 1 (MCD4).